Here is a 185-residue protein sequence, read N- to C-terminus: Ribosome-recycling factor (185 aa).

The protein belongs to the RRF family.

The protein localises to the cytoplasm. In terms of biological role, responsible for the release of ribosomes from messenger RNA at the termination of protein biosynthesis. May increase the efficiency of translation by recycling ribosomes from one round of translation to another. In Wolbachia sp. subsp. Drosophila simulans (strain wRi), this protein is Ribosome-recycling factor.